The chain runs to 109 residues: Synaptobrevin-1 (109 aa).

A disordered region spans residues 1–26 (MDAQGDAGAQGGSQGGPRPSNKRLQQ). Residues 1–86 (MDAQGDAGAQ…KRKYWWKNIK (86 aa)) are Cytoplasmic-facing. Residues 23–83 (RLQQTQAQVD…ATLKRKYWWK (61 aa)) form the v-SNARE coiled-coil homology domain. A helical; Anchor for type IV membrane protein transmembrane segment spans residues 87-107 (MMIIMCAIVVILIIIIVLWAG). The Extracellular segment spans residues 108-109 (GK).

Belongs to the synaptobrevin family. Part of the SNARE core complex containing ric-4/SNAP25, snb-1/VAMP2 and unc-64/STX1A. This complex binds to cpx-1/CPLX1. Expressed in the nervous system notably the nerve ring, ventral cord and dorsal cord.

The protein resides in the cytoplasmic vesicle. The protein localises to the secretory vesicle. Its subcellular location is the synaptic vesicle membrane. It localises to the cell membrane. It is found in the synapse. The protein resides in the synaptosome. Its function is as follows. Involved in the targeting and/or fusion of transport vesicles to their target membrane. Acts in neuronal exocytosis of synaptic transmission. Likely to have a role in cholinergic transmisson. Required for viability, coordinated movement and M3 pharynx motor neuron function. This Caenorhabditis elegans protein is Synaptobrevin-1.